The primary structure comprises 459 residues: N-chimaerin (459 aa).

N-acetylalanine is present on Ala-2. The 87-residue stretch at Glu-49 to Ala-135 folds into the SH2 domain. The residue at position 192 (Thr-192) is a Phosphothreonine. A Phorbol-ester/DAG-type zinc finger spans residues Val-205–Cys-255. The 192-residue stretch at Cys-268–Phe-459 folds into the Rho-GAP domain. Thr-340 is modified (phosphothreonine).

As to quaternary structure, interacts with EPHA4; effector of EPHA4 in axon guidance linking EPHA4 activation to RAC1 regulation. May also interact with EPHB1 and EPHB2. In terms of processing, phosphorylated. Phosphorylation is EPHA4 kinase activity-dependent.

GTPase-activating protein for p21-rac and a phorbol ester receptor. May play an important role in neuronal signal-transduction mechanisms. Involved in the assembly of neuronal locomotor circuits as a direct effector of EPHA4 in axon guidance. This Mus musculus (Mouse) protein is N-chimaerin (Chn1).